Reading from the N-terminus, the 221-residue chain is GTP-binding nuclear protein Ran-2 (221 aa).

A Small GTPase Ran-type domain is found at 10–174; that stretch reads DYPSFKLVIV…LYLARKLAGD (165 aa). Position 21-28 (21-28) interacts with GTP; it reads DGGTGKTT. The switch-I stretch occupies residues 40–48; it reads KKYEPTIGV. Residues glycine 71, 125-128, and 153-155 each bind GTP; these read NKVD and SAK. Residues 71–87 form a switch-II region; sequence GQEKFGGLRDGYYIHGQ. Positions 202 to 212 are enriched in low complexity; that stretch reads ADLAAAAAQPL. The tract at residues 202 to 221 is disordered; it reads ADLAAAAAQPLPDDDDDAFE.

This sequence belongs to the small GTPase superfamily. Ran family. As to quaternary structure, found in a nuclear export complex with RanGTP, exportin and pre-miRNA. Interacts with RanBP1a and RanBP1b. Interacts with PHRIP1. Interacts with KPNB1. Binds to PHIP1.

It is found in the nucleus. Its subcellular location is the nucleus envelope. In terms of biological role, GTP-binding protein involved in nucleocytoplasmic transport. Required for the import of protein into the nucleus and also for RNA export. Involved in chromatin condensation and control of cell cycle. In Arabidopsis thaliana (Mouse-ear cress), this protein is GTP-binding nuclear protein Ran-2.